Reading from the N-terminus, the 201-residue chain is MINKAILGGTFDPIHNAHINVAYEALERFNLEEVIFIPAGNPPHKINLKKTPAHIRYEMVKLAIEKETRFSISDFEIKSKGLSYTYRTLKHFKEKEPETNWYFITGEDCLSYLEHWKYIDEIFNICNFVIFSREGFKEKEEIIKKKKSILLKYRKEILFMDASILDISSTKIRNRIKEGKEVSFYMPDKVYKFILQNNLYK.

The protein belongs to the NadD family.

The catalysed reaction is nicotinate beta-D-ribonucleotide + ATP + H(+) = deamido-NAD(+) + diphosphate. Its pathway is cofactor biosynthesis; NAD(+) biosynthesis; deamido-NAD(+) from nicotinate D-ribonucleotide: step 1/1. Functionally, catalyzes the reversible adenylation of nicotinate mononucleotide (NaMN) to nicotinic acid adenine dinucleotide (NaAD). The protein is Probable nicotinate-nucleotide adenylyltransferase of Clostridium botulinum (strain Langeland / NCTC 10281 / Type F).